We begin with the raw amino-acid sequence, 138 residues long: MSARRTSREIAVMALYQLELTGPPLKEVLKFKWYDKKTEPEERDFAVSIVNGVVKNQEQIDTLIKKYSKNWDFSRISIVNKAILRLSVFALLYSWEVPKNVTIDEAVELTKEFESEESARFVNGILDAILKNETKSDG.

This sequence belongs to the NusB family.

In terms of biological role, involved in transcription antitermination. Required for transcription of ribosomal RNA (rRNA) genes. Binds specifically to the boxA antiterminator sequence of the ribosomal RNA (rrn) operons. The protein is Transcription antitermination protein NusB of Leptospira borgpetersenii serovar Hardjo-bovis (strain JB197).